We begin with the raw amino-acid sequence, 248 residues long: Large ribosomal subunit protein uL30 (248 aa).

At M1 the chain carries N-acetylmethionine. Repeat copies occupy residues 7-18 (KKKEVPAVPETL), 19-30 (KKKRRNFAELKI), 31-42 (KRLRKKFAQKML), and 43-54 (RKARRKLIYEKA). Positions 7 to 54 (KKKEVPAVPETLKKKRRNFAELKIKRLRKKFAQKMLRKARRKLIYEKA) are 4 X 12 AA tandem repeats. Residue T17 is modified to Phosphothreonine. At K124 the chain carries N6-acetyllysine. At K127 the chain carries N6-succinyllysine. Y139 carries the phosphotyrosine modification.

The protein belongs to the universal ribosomal protein uL30 family. In terms of assembly, component of the large ribosomal subunit. Homodimer. Interacts with DHX33.

Its subcellular location is the cytoplasm. In terms of biological role, component of the large ribosomal subunit. The ribosome is a large ribonucleoprotein complex responsible for the synthesis of proteins in the cell. Binds to G-rich structures in 28S rRNA and in mRNAs. Plays a regulatory role in the translation apparatus; inhibits cell-free translation of mRNAs. This chain is Large ribosomal subunit protein uL30 (RPL7), found in Homo sapiens (Human).